The primary structure comprises 154 residues: 3-hydroxyacyl-[acyl-carrier-protein] dehydratase FabZ (154 aa).

The active site involves H54.

The protein belongs to the thioester dehydratase family. FabZ subfamily.

It localises to the cytoplasm. It carries out the reaction a (3R)-hydroxyacyl-[ACP] = a (2E)-enoyl-[ACP] + H2O. Involved in unsaturated fatty acids biosynthesis. Catalyzes the dehydration of short chain beta-hydroxyacyl-ACPs and long chain saturated and unsaturated beta-hydroxyacyl-ACPs. This Shewanella putrefaciens (strain CN-32 / ATCC BAA-453) protein is 3-hydroxyacyl-[acyl-carrier-protein] dehydratase FabZ.